A 201-amino-acid chain; its full sequence is Respiratory growth induced protein 1 (201 aa).

The tract at residues 1–45 (MAGKKKSKSEALPLDLDNIKPMDHLQPVPKTRSSSITSIESADEP) is disordered. Polar residues predominate over residues 31–40 (TRSSSITSIE).

This sequence belongs to the RGI1 family.

The protein localises to the cell membrane. Functionally, involved in the control of energetic metabolism and significantly contribute to cell fitness, especially under respiratory growth conditions. This is Respiratory growth induced protein 1 (RGI1) from Candida albicans (strain SC5314 / ATCC MYA-2876) (Yeast).